The primary structure comprises 199 residues: Peptidyl-tRNA hydrolase (199 aa).

A tRNA-binding site is contributed by tyrosine 15. The active-site Proton acceptor is the histidine 20. TRNA-binding residues include tyrosine 66, asparagine 68, and asparagine 114.

It belongs to the PTH family. As to quaternary structure, monomer.

It is found in the cytoplasm. The enzyme catalyses an N-acyl-L-alpha-aminoacyl-tRNA + H2O = an N-acyl-L-amino acid + a tRNA + H(+). Functionally, hydrolyzes ribosome-free peptidyl-tRNAs (with 1 or more amino acids incorporated), which drop off the ribosome during protein synthesis, or as a result of ribosome stalling. In terms of biological role, catalyzes the release of premature peptidyl moieties from peptidyl-tRNA molecules trapped in stalled 50S ribosomal subunits, and thus maintains levels of free tRNAs and 50S ribosomes. This is Peptidyl-tRNA hydrolase from Burkholderia ambifaria (strain MC40-6).